Reading from the N-terminus, the 843-residue chain is Protein translocase subunit SecA 1 (843 aa).

ATP contacts are provided by residues Gln91, 109 to 113 (GEGKT), and Asp498. Residues 799–813 (EAKHVSAEDGKEKVK) are compositionally biased toward basic and acidic residues. The interval 799–826 (EAKHVSAEDGKEKVKPKPIVKGDQVGRN) is disordered. Residues Cys829, Cys831, Cys840, and His841 each contribute to the Zn(2+) site.

It belongs to the SecA family. In terms of assembly, monomer and homodimer. Part of the essential Sec protein translocation apparatus which comprises SecA, SecYEG and auxiliary proteins SecDF. Other proteins may also be involved. Requires Zn(2+) as cofactor.

Its subcellular location is the cell membrane. It is found in the cytoplasm. The enzyme catalyses ATP + H2O + cellular proteinSide 1 = ADP + phosphate + cellular proteinSide 2.. Part of the Sec protein translocase complex. Interacts with the SecYEG preprotein conducting channel. Has a central role in coupling the hydrolysis of ATP to the transfer of proteins into and across the cell membrane, serving as an ATP-driven molecular motor driving the stepwise translocation of polypeptide chains across the membrane. The polypeptide is Protein translocase subunit SecA 1 (Staphylococcus aureus (strain N315)).